A 172-amino-acid polypeptide reads, in one-letter code: Probable calcium-binding protein CML28 (172 aa).

EF-hand domains lie at 1-36 (MDSTELRKVFKMFDKNGDGRITKKELGESFKNFGIF), 37-72 (IPDDELDATMDKIDANGDGCVDVEEFGLLYRSILGD), 95-130 (DEDEGMREAFNVFDQNGDGFITVDELRSVLSSLGLK), and 133-168 (RTADDCRRMISMVDADGDGRVDFKEFKQMMRGGGFA). Positions 14, 16, 18, 20, 25, 50, 52, 54, 56, 61, 108, 110, 112, 119, 146, 148, 150, 152, and 157 each coordinate Ca(2+).

Functionally, potential calcium sensor. The protein is Probable calcium-binding protein CML28 (CML28) of Oryza sativa subsp. japonica (Rice).